We begin with the raw amino-acid sequence, 24 residues long: Small ribosomal subunit protein uS5 (24 aa).

It belongs to the universal ribosomal protein uS5 family. Part of the 30S ribosomal subunit. Contacts proteins S4 and S8.

With S4 and S12 plays an important role in translational accuracy. In terms of biological role, located at the back of the 30S subunit body where it stabilizes the conformation of the head with respect to the body. The protein is Small ribosomal subunit protein uS5 (rpsE) of Vibrio proteolyticus (Aeromonas proteolytica).